Reading from the N-terminus, the 101-residue chain is Chaperone modulatory protein CbpM (101 aa).

It belongs to the CbpM family.

Interacts with CbpA and inhibits both the DnaJ-like co-chaperone activity and the DNA binding activity of CbpA. Together with CbpA, modulates the activity of the DnaK chaperone system. Does not inhibit the co-chaperone activity of DnaJ. The chain is Chaperone modulatory protein CbpM from Salmonella paratyphi A (strain ATCC 9150 / SARB42).